We begin with the raw amino-acid sequence, 316 residues long: Aprataxin (316 aa).

Residues 1–38 (HASARGEGFLLLKADCNKGYVTVKQIGVNPTSVDLVDV) enclose the FHA-like domain. The segment at 104-142 (KKMEVVDTQSSSADLRPSKSSVSPHEGTTSRKEHLGHWS) is disordered. Positions 110–130 (DTQSSSADLRPSKSSVSPHEG) are enriched in polar residues. Residues 142–247 (SQGLKSSMQD…ISQDFDSPAL (106 aa)) form the HIT domain. Interaction with DNA substrate stretches follow at residues 167–171 (DKYPK) and 229–230 (SM). The Histidine triad motif motif lies at 232-236 (QLHLH). Catalysis depends on His-234, which acts as the Tele-AMP-histidine intermediate. The segment at 291 to 313 (LRCHLCKQQLSTIPQLKEHLKKH) adopts a C2H2-type zinc-finger fold.

Its subcellular location is the nucleus. The protein localises to the nucleoplasm. It is found in the nucleolus. The enzyme catalyses a 5'-end adenosine-5'-diphospho-5'-2'-deoxyribonucleoside-DNA + H2O = a 5'-end 5'-phospho-2'-deoxyribonucleoside-DNA + AMP + 2 H(+). The catalysed reaction is a 5'-end adenosine-5'-diphospho-5'-ribonucleoside-2'-deoxyribonucleotide-DNA + H2O = a 5'-end 5'-phospho-ribonucleoside-2'-deoxyribonucleotide-DNA + AMP + 2 H(+). It carries out the reaction a 3'-end 2'-deoxyribonucleotide-3'-diphospho-5'-guanosine-DNA + H2O = a 3'-end 2'-deoxyribonucleotide 3'-phosphate-DNA + GMP + 2 H(+). In terms of biological role, DNA-binding protein involved in single-strand DNA break repair, double-strand DNA break repair and base excision repair. Resolves abortive DNA ligation intermediates formed either at base excision sites, or when DNA ligases attempt to repair non-ligatable breaks induced by reactive oxygen species. Catalyzes the release of adenylate groups covalently linked to 5'-phosphate termini, resulting in the production of 5'-phosphate termini that can be efficiently rejoined. Also able to hydrolyze adenosine 5'-monophosphoramidate (AMP-NH(2)) and diadenosine tetraphosphate (AppppA), but with lower catalytic activity. Likewise, catalyzes the release of 3'-linked guanosine (DNAppG) and inosine (DNAppI) from DNA, but has higher specific activity with 5'-linked adenosine (AppDNA). In Gallus gallus (Chicken), this protein is Aprataxin (APTX).